We begin with the raw amino-acid sequence, 243 residues long: Histone H2B.2 (243 aa).

Position 2 is a n,N,N-trimethylalanine; alternate (alanine 2). The residue at position 2 (alanine 2) is a N,N-dimethylalanine; alternate. Position 2 is an N-methylalanine; alternate (alanine 2). The interval 67-145 (PDERSLPVGE…KKKKKKKRDD (79 aa)) is disordered. Residues 120–132 (GTLKKTDKVEKKQ) show a composition bias toward basic and acidic residues. A compositionally biased stretch (basic residues) spans 133 to 142 (ENKKKKKKKK).

This sequence belongs to the histone H2B family. The nucleosome is a histone octamer containing two molecules each of H2A, H2B, H3 and H4 assembled in one H3-H4 heterotetramer and two H2A-H2B heterodimers. The octamer wraps approximately 147 bp of DNA. Post-translationally, can be acetylated to form H2BK6ac.

It localises to the nucleus. It is found in the chromosome. Core component of nucleosome. Nucleosomes wrap and compact DNA into chromatin, limiting DNA accessibility to the cellular machineries which require DNA as a template. Histones thereby play a central role in transcription regulation, DNA repair, DNA replication and chromosomal stability. DNA accessibility is regulated via a complex set of post-translational modifications of histones, also called histone code, and nucleosome remodeling. The protein is Histone H2B.2 of Arabidopsis thaliana (Mouse-ear cress).